A 352-amino-acid polypeptide reads, in one-letter code: Mitochondrial ubiquitin ligase activator of NFKB 1 (352 aa).

The Cytoplasmic portion of the chain corresponds to 1-8 (MESGSRPS). The chain crosses the membrane as a helical span at residues 9 to 29 (LGQVILLGTSSMVTAVLYSIY). Topologically, residues 30–238 (RQKAQVAQEL…LLHRQESSVR (209 aa)) are mitochondrial intermembrane. Lysine 52 participates in a covalent cross-link: Glycyl lysine isopeptide (Lys-Gly) (interchain with G-Cter in ubiquitin). The helical transmembrane segment at 239–259 (LWKILVLVFGFATCATLFFIL) threads the bilayer. The Cytoplasmic segment spans residues 260 to 352 (RKQYLHRQER…ITRVIPLYNS (93 aa)). Residue lysine 299 forms a Glycyl lysine isopeptide (Lys-Gly) (interchain with G-Cter in ubiquitin) linkage. An RING-type zinc finger spans residues 302 to 340 (CVVCLSNFKSCVFLECGHVCSCRQCYLALPEPKRCPICR).

In terms of assembly, homooligomer. Interacts with MAP3K7/TAK1. Interacts with UBC9. Interacts with and sumoylates DNM1L. Interacts with MAVS. Interacts with TP53 (via N-terminus); the interaction leads to ubiquitination and proteasomal degradation of TP53. In terms of processing, ubiquitinated by PRKN during mitophagy, leading to its degradation and enhancement of mitophagy. Deubiquitinated by USP30. As to expression, expressed in cortical neurons (at protein level).

Its subcellular location is the mitochondrion outer membrane. The protein resides in the peroxisome. The catalysed reaction is S-ubiquitinyl-[E2 ubiquitin-conjugating enzyme]-L-cysteine + [acceptor protein]-L-lysine = [E2 ubiquitin-conjugating enzyme]-L-cysteine + N(6)-ubiquitinyl-[acceptor protein]-L-lysine.. Its pathway is protein modification; protein ubiquitination. The protein operates within protein modification; protein sumoylation. Its function is as follows. Exhibits weak E3 ubiquitin-protein ligase activity. E3 ubiquitin ligases accept ubiquitin from an E2 ubiquitin-conjugating enzyme in the form of a thioester and then directly transfer the ubiquitin to targeted substrates. Can ubiquitinate AKT1 preferentially at 'Lys-284' involving 'Lys-48'-linked polyubiquitination and seems to be involved in regulation of Akt signaling by targeting phosphorylated Akt to proteasomal degradation. Mediates polyubiquitination of cytoplasmic TP53 at 'Lys-27' which targets TP53 for proteasomal degradation, thus reducing TP53 levels in the cytoplasm and mitochondrion. Proposed to preferentially act as a SUMO E3 ligase at physiological concentrations. Plays a role in the control of mitochondrial morphology by promoting mitochondrial fragmentation, and influences mitochondrial localization. Likely to promote mitochondrial fission through negatively regulating the mitochondrial fusion proteins MFN1 and MFN2, acting in a pathway that is parallel to the PRKN/PINK1 regulatory pathway. May also be involved in the sumoylation of the membrane fission protein DNM1L. Inhibits cell growth. When overexpressed, activates JNK through MAP3K7/TAK1 and induces caspase-dependent apoptosis. Involved in the modulation of innate immune defense against viruses by inhibiting RIGI-dependent antiviral response. Can mediate RIGI sumoylation and disrupt its polyubiquitination. The polypeptide is Mitochondrial ubiquitin ligase activator of NFKB 1 (Mul1) (Mus musculus (Mouse)).